A 372-amino-acid chain; its full sequence is NAD(P)H-quinone oxidoreductase subunit 1 (372 aa).

A run of 8 helical transmembrane segments spans residues Leu-27–Val-47, Leu-97–Val-117, Val-128–Met-148, Ala-166–Met-186, Leu-204–Leu-224, Val-266–Val-286, Ser-308–Leu-328, and Phe-347–Pro-367.

The protein belongs to the complex I subunit 1 family. In terms of assembly, NDH-1 is composed of at least 11 different subunits.

It is found in the cellular thylakoid membrane. It catalyses the reaction a plastoquinone + NADH + (n+1) H(+)(in) = a plastoquinol + NAD(+) + n H(+)(out). The enzyme catalyses a plastoquinone + NADPH + (n+1) H(+)(in) = a plastoquinol + NADP(+) + n H(+)(out). Its function is as follows. NDH-1 shuttles electrons from an unknown electron donor, via FMN and iron-sulfur (Fe-S) centers, to quinones in the respiratory and/or the photosynthetic chain. The immediate electron acceptor for the enzyme in this species is believed to be plastoquinone. Couples the redox reaction to proton translocation, and thus conserves the redox energy in a proton gradient. This Prochlorococcus marinus (strain MIT 9313) protein is NAD(P)H-quinone oxidoreductase subunit 1.